The sequence spans 64 residues: Disintegrin VB7A (64 aa).

The Disintegrin domain occupies 1–64 (NSGNPCCDPV…SDCPRNPYKD (64 aa)). Intrachain disulfides connect Cys6–Cys29, Cys20–Cys26, Cys25–Cys50, and Cys38–Cys57. The Cell attachment site signature appears at 42 to 44 (RGD).

This sequence belongs to the disintegrin family. Dimeric disintegrin subfamily. In terms of assembly, heterodimer with VB7B; disulfide-linked. Expressed by the venom gland.

The protein resides in the secreted. Poor inhibitor of platelet aggregation. The disintegrin inhibits the adhesion of cells expressing the RGD-dependent integrin alpha-5/beta-1 (ITGA5/ITGB1) to immobilized fibronectin. Inhibition on alpha-2b/beta-3 (ITGA2B/ITGB3) is low. This chain is Disintegrin VB7A, found in Vipera berus berus (Common viper).